A 555-amino-acid chain; its full sequence is Putative ankyrin repeat protein L283 (555 aa).

ANK repeat units follow at residues 364 to 389 (TKVN…EDDI), 390 to 420 (VFKK…DINE), 422 to 447 (IKLA…KVRC), and 455 to 488 (GYLE…EGGK).

This Acanthamoeba polyphaga mimivirus (APMV) protein is Putative ankyrin repeat protein L283.